We begin with the raw amino-acid sequence, 230 residues long: UPF0173 metal-dependent hydrolase TM1040_1920 (230 aa).

This sequence belongs to the UPF0173 family.

In Ruegeria sp. (strain TM1040) (Silicibacter sp.), this protein is UPF0173 metal-dependent hydrolase TM1040_1920.